The primary structure comprises 753 residues: 5-methyltetrahydropteroyltriglutamate--homocysteine methyltransferase (753 aa).

5-methyltetrahydropteroyltri-L-glutamate-binding positions include 17-20 (RELK) and lysine 117. L-homocysteine-binding positions include 431–433 (IGS) and glutamate 484. L-methionine-binding positions include 431 to 433 (IGS) and glutamate 484. Residues 515-516 (RC) and tryptophan 561 each bind 5-methyltetrahydropteroyltri-L-glutamate. Residue aspartate 599 coordinates L-homocysteine. Aspartate 599 provides a ligand contact to L-methionine. Glutamate 605 contacts 5-methyltetrahydropteroyltri-L-glutamate. Histidine 641, cysteine 643, and glutamate 665 together coordinate Zn(2+). Histidine 694 acts as the Proton donor in catalysis. Residue cysteine 726 coordinates Zn(2+).

The protein belongs to the vitamin-B12 independent methionine synthase family. Zn(2+) is required as a cofactor.

It carries out the reaction 5-methyltetrahydropteroyltri-L-glutamate + L-homocysteine = tetrahydropteroyltri-L-glutamate + L-methionine. The protein operates within amino-acid biosynthesis; L-methionine biosynthesis via de novo pathway; L-methionine from L-homocysteine (MetE route): step 1/1. Catalyzes the transfer of a methyl group from 5-methyltetrahydrofolate to homocysteine resulting in methionine formation. This is 5-methyltetrahydropteroyltriglutamate--homocysteine methyltransferase from Enterobacter sp. (strain 638).